The sequence spans 482 residues: [Fructose-bisphosphate aldolase]-lysine N-methyltransferase, chloroplastic (482 aa).

Residues 1–57 (MSASVAVVSGFLRIPSIQKSQNPSFLFSRPKKSLVRPISASSSELPENVRNFWKWLR) constitute a chloroplast transit peptide. The region spanning 59-282 (QGVVSGKSVA…AGEQVYIQYD (224 aa)) is the SET domain. Residues 75 to 77 (EGL) and R217 contribute to the S-adenosyl-L-methionine site. Substrate is bound by residues R217, R221, and D234. Position 237 to 238 (237 to 238 (NH)) interacts with S-adenosyl-L-methionine. Substrate is bound by residues Y249, Y281, and Y294.

It belongs to the class V-like SAM-binding methyltransferase superfamily. Plant protein-lysine LSMT methyltransferase family.

It localises to the plastid. The protein resides in the chloroplast stroma. The enzyme catalyses [fructose-bisphosphate aldolase]-L-lysine + 3 S-adenosyl-L-methionine = [fructose-bisphosphate aldolase]-N(6),N(6),N(6)-trimethyl-L-lysine + 3 S-adenosyl-L-homocysteine + 3 H(+). Functionally, protein-lysine methyltransferase methylating chloroplastic fructose 1,6-bisphosphate aldolases. Can also use with low efficiency gamma-tocopherol methyltransferase as substrate, but not a cytosolic aldolase. Able to interact with unmethylated Rubisco, but unlike in pea, the complex is catalytically unproductive. The sequence is that of [Fructose-bisphosphate aldolase]-lysine N-methyltransferase, chloroplastic (LSMT-L) from Arabidopsis thaliana (Mouse-ear cress).